A 564-amino-acid polypeptide reads, in one-letter code: Septation ring formation regulator EzrA (564 aa).

Topologically, residues 1 to 4 are extracellular; sequence MVLY. Residues 5–23 form a helical membrane-spanning segment; the sequence is IILAIIVIILIAVGVLFYL. Residues 24 to 564 lie on the Cytoplasmic side of the membrane; the sequence is RSNKRQIIEK…KHIEEEVIKQ (541 aa). Coiled coils occupy residues 99–138, 190–223, 271–300, 350–435, and 471–550; these read SFNASQSEIDDANELMDSYEQSYQQQLEDVNEIIALYKDN, DGNYVQAHNHIAALNEQMKQLRSYMEEIPELIRE, LISRLELEEANDKLANINDKLDDMYDLIEH, VRQF…RRLL, and VKQL…ESVE.

It belongs to the EzrA family.

The protein localises to the cell membrane. In terms of biological role, negative regulator of FtsZ ring formation; modulates the frequency and position of FtsZ ring formation. Inhibits FtsZ ring formation at polar sites. Interacts either with FtsZ or with one of its binding partners to promote depolymerization. The protein is Septation ring formation regulator EzrA of Staphylococcus aureus (strain JH1).